A 308-amino-acid polypeptide reads, in one-letter code: MIKISRKEYVSMYGPTTGDKVRLGDTELIAEIEKDYTVYGEEIKFGGGKTIRDGMSQSVSPDVNELDAVITNAMIIDYTGIYKADIGIKDGKIAGIGKAGNRDTQDGVGMDLVVGASTEAIAGEGLIVTAGGIDTHIHFISPTQIPTALYSGVTTMIGGGTGPAAGTFATTISPGEWNIKQMIRAAEEYTMNLGFFGKGNTSNVKALEDQIKAGALGFKVHEDCGSTPAVINHSLDIAEKYDVQVAIHTDTLNEGGAVEDTLAAIGGRTIHTFHTEGAGGGHAPDIIKAAGEANILPASTNPTIPFTK.

The 178-residue stretch at 131-308 (GGIDTHIHFI…STNPTIPFTK (178 aa)) folds into the Urease domain. 5 residues coordinate Ni(2+): His-136, His-138, Lys-219, His-248, and His-274. Lys-219 bears the N6-carboxylysine mark.

Belongs to the metallo-dependent hydrolases superfamily. Urease alpha subunit family. Heterohexamer of 3 UreA (alpha) and 3 UreB (beta) subunits. The cofactor is Ni cation. Post-translationally, carboxylation allows a single lysine to coordinate two nickel ions.

It localises to the cytoplasm. The catalysed reaction is urea + 2 H2O + H(+) = hydrogencarbonate + 2 NH4(+). The protein operates within nitrogen metabolism; urea degradation; CO(2) and NH(3) from urea (urease route): step 1/1. This chain is Urease subunit beta (ureB), found in Helicobacter mustelae.